The sequence spans 190 residues: RNA pyrophosphohydrolase (190 aa).

A Nudix hydrolase domain is found at 6–149 (GYRPNVGIIL…KRDVYTQALN (144 aa)). Positions 38–59 (GGIKYGESPVQAMYRELHEEVG) match the Nudix box motif. The interval 167 to 190 (QRVHGPRSTDSPSSETDGHAHIAG) is disordered.

Belongs to the Nudix hydrolase family. RppH subfamily. A divalent metal cation is required as a cofactor.

Its function is as follows. Accelerates the degradation of transcripts by removing pyrophosphate from the 5'-end of triphosphorylated RNA, leading to a more labile monophosphorylated state that can stimulate subsequent ribonuclease cleavage. This chain is RNA pyrophosphohydrolase, found in Bordetella pertussis (strain Tohama I / ATCC BAA-589 / NCTC 13251).